The chain runs to 1401 residues: DNA-directed RNA polymerase subunit beta (1401 aa).

It belongs to the RNA polymerase beta chain family. In terms of assembly, the RNAP catalytic core consists of 2 alpha, 1 beta, 1 beta' and 1 omega subunit. When a sigma factor is associated with the core the holoenzyme is formed, which can initiate transcription.

The enzyme catalyses RNA(n) + a ribonucleoside 5'-triphosphate = RNA(n+1) + diphosphate. Its function is as follows. DNA-dependent RNA polymerase catalyzes the transcription of DNA into RNA using the four ribonucleoside triphosphates as substrates. In Desulforapulum autotrophicum (strain ATCC 43914 / DSM 3382 / VKM B-1955 / HRM2) (Desulfobacterium autotrophicum), this protein is DNA-directed RNA polymerase subunit beta.